Here is a 197-residue protein sequence, read N- to C-terminus: Pyridoxal 5'-phosphate synthase subunit PdxT (197 aa).

An L-glutamine-binding site is contributed by 54 to 56 (GES). Cysteine 86 functions as the Nucleophile in the catalytic mechanism. L-glutamine contacts are provided by residues arginine 113 and 141-142 (IR). Active-site charge relay system residues include histidine 177 and glutamate 179.

It belongs to the glutaminase PdxT/SNO family. In the presence of PdxS, forms a dodecamer of heterodimers. Only shows activity in the heterodimer.

The catalysed reaction is aldehydo-D-ribose 5-phosphate + D-glyceraldehyde 3-phosphate + L-glutamine = pyridoxal 5'-phosphate + L-glutamate + phosphate + 3 H2O + H(+). It catalyses the reaction L-glutamine + H2O = L-glutamate + NH4(+). Its pathway is cofactor biosynthesis; pyridoxal 5'-phosphate biosynthesis. In terms of biological role, catalyzes the hydrolysis of glutamine to glutamate and ammonia as part of the biosynthesis of pyridoxal 5'-phosphate. The resulting ammonia molecule is channeled to the active site of PdxS. This is Pyridoxal 5'-phosphate synthase subunit PdxT from Haloarcula marismortui (strain ATCC 43049 / DSM 3752 / JCM 8966 / VKM B-1809) (Halobacterium marismortui).